A 123-amino-acid chain; its full sequence is Small ribosomal subunit protein uS12c (123 aa).

Belongs to the universal ribosomal protein uS12 family. As to quaternary structure, part of the 30S ribosomal subunit.

It is found in the plastid. Its subcellular location is the chloroplast. Its function is as follows. With S4 and S5 plays an important role in translational accuracy. Located at the interface of the 30S and 50S subunits. In Physcomitrium patens (Spreading-leaved earth moss), this protein is Small ribosomal subunit protein uS12c (rps12).